A 597-amino-acid polypeptide reads, in one-letter code: Elongation factor 4 (597 aa).

A tr-type G domain is found at 2 to 184 (KHIRNFSIIA…NIVSAIPAPE (183 aa)). GTP-binding positions include 14–19 (DHGKST) and 131–134 (NKID).

This sequence belongs to the TRAFAC class translation factor GTPase superfamily. Classic translation factor GTPase family. LepA subfamily.

The protein resides in the cell inner membrane. It catalyses the reaction GTP + H2O = GDP + phosphate + H(+). Its function is as follows. Required for accurate and efficient protein synthesis under certain stress conditions. May act as a fidelity factor of the translation reaction, by catalyzing a one-codon backward translocation of tRNAs on improperly translocated ribosomes. Back-translocation proceeds from a post-translocation (POST) complex to a pre-translocation (PRE) complex, thus giving elongation factor G a second chance to translocate the tRNAs correctly. Binds to ribosomes in a GTP-dependent manner. This is Elongation factor 4 from Vibrio campbellii (strain ATCC BAA-1116).